Consider the following 1637-residue polypeptide: Kinesin-like protein KIF21B (1637 aa).

In terms of domain architecture, Kinesin motor spans 8-370; the sequence is CVKVAVRIRP…LKYANRARNI (363 aa). Residue 87–94 participates in ATP binding; it reads GQTGAGKT. Coiled-coil stretches lie at residues 376-604 and 631-824; these read VNQD…EEEG and NFQA…ALRR. The tract at residues 400 to 1099 is interaction with TRIM3; the sequence is MEYKAGKRVI…LQALIYNVQQ (700 aa). A compositionally biased stretch (low complexity) spans 509–533; it reads ASARSPYSLGASPAAPAFGGSPASS. Disordered stretches follow at residues 509–538 and 552–628; these read ASAR…EDAS and KKKE…PEEK. Residues 578 to 627 show a composition bias toward acidic residues; sequence NSEETDENEAEEEEEERDESGCEEEEGREDEDEDSGSEESLVDSDSDPEE. Phosphoserine is present on S579. At T582 the chain carries Phosphothreonine. Disordered stretches follow at residues 830–865 and 880–906; these read SERV…GARS and FLGD…GASQ. Positions 846 to 865 are enriched in low complexity; it reads SGAEVSASTTSSEAESGARS. A coiled-coil region spans residues 928–1016; it reads MQRMTIVNLE…EETKEELDST (89 aa). 3 positions are modified to phosphoserine: S1149, S1167, and S1215. Residues 1194 to 1217 are compositionally biased toward polar residues; sequence RTVSLPTRGSTFPRQSRATETSPL. Residues 1194–1251 form a disordered region; it reads RTVSLPTRGSTFPRQSRATETSPLTRRKSYDRGQPIRSTDVGFTPPSSPPTRPRNDRN. A Phosphothreonine modification is found at T1237. A Phosphoserine modification is found at S1241. WD repeat units follow at residues 1306-1343, 1346-1384, 1410-1448, 1451-1493, 1502-1539, 1543-1582, and 1585-1622; these read GHTK…EIAA, GHPN…KCIR, QGEH…PVGK, GHIG…TGTI, PHYD…LIQQ, AHKD…PIGE, and GHDS…TPCL.

The protein belongs to the TRAFAC class myosin-kinesin ATPase superfamily. Kinesin family. In terms of assembly, interacts with TRIM3; the interaction positively affects motility of KIF21B. Interacts with GABARAP and GABA(A) receptor subunits: GABRG2, GABRA1 and GABRA2. May interact with GABA(A) receptor subunits: GABRB2 and GABRB3.

The protein resides in the cytoplasm. It localises to the cytoskeleton. It is found in the cell projection. Its subcellular location is the dendrite. The protein localises to the growth cone. The protein resides in the axon. It localises to the cytoplasmic vesicle. In terms of biological role, plus-end directed microtubule-dependent motor protein which displays processive activity. Is involved in regulation of microtubule dynamics, synapse function and neuronal morphology, including dendritic tree branching and spine formation. Plays a role in lerning and memory. Involved in delivery of gamma-aminobutyric acid (GABA(A)) receptor to cell surface. This chain is Kinesin-like protein KIF21B (KIF21B), found in Homo sapiens (Human).